Reading from the N-terminus, the 329-residue chain is Putative dehydrogenase RB0419 (329 aa).

It belongs to the ornithine cyclodeaminase/mu-crystallin family.

This chain is Putative dehydrogenase RB0419, found in Rhizobium meliloti (strain 1021) (Ensifer meliloti).